A 239-amino-acid chain; its full sequence is Probable fimbrial chaperone YehC (239 aa).

Residues 1 to 31 (MAAIPWRPFNLRGIKMKGLLSLLIFSMVLPA) form the signal peptide.

It belongs to the periplasmic pilus chaperone family.

The protein resides in the periplasm. Its function is as follows. Part of the yehABCD fimbrial operon. Could contribute to adhesion to various surfaces in specific environmental niches. The chain is Probable fimbrial chaperone YehC (yehC) from Escherichia coli (strain K12).